The primary structure comprises 202 residues: CASP-like protein 1E1 (202 aa).

Residues 1–33 (MESQCRPNVDGVHNGVESHVKVVEKPRSVGSSS) lie on the Cytoplasmic side of the membrane. The helical transmembrane segment at 34–54 (EFVLRILGLLLTLIAAVVAGV) threads the bilayer. Residues 55 to 85 (DKQTKIIPLTLIKTLPSLHVPVTAKWSDMSA) lie on the Extracellular side of the membrane. The helical transmembrane segment at 86 to 106 (FVYLVVSNAIACSYAAISLVL) threads the bilayer. The Cytoplasmic portion of the chain corresponds to 107-118 (VTMLGRRGKGGR). A helical transmembrane segment spans residues 119–139 (VLAVIVLDLHMVGLLFSANGA). Over 140 to 172 (ATAVGVLGQYGNSHVEWKKVCNVFDSFCHHLVA) the chain is Extracellular. Residues 173–193 (SLALSFLGSLSFLGLVLLAIL) form a helical membrane-spanning segment. The Cytoplasmic portion of the chain corresponds to 194-202 (NLHKKSSTK).

Belongs to the Casparian strip membrane proteins (CASP) family. As to quaternary structure, homodimer and heterodimers.

The protein localises to the cell membrane. This Vitis vinifera (Grape) protein is CASP-like protein 1E1.